Reading from the N-terminus, the 440-residue chain is Protein EFFECTOR OF TRANSCRIPTION (440 aa).

A GIY-YIG domain is found at 131–167 (SIQGLGVAVNIHDADDISHGQTESIRTRLRSYGRPVP). Residues 172–216 (LGDNASQTITQKKTGGRSKDKKHGFEEERDVSRVEAEENNTNSVH) form a disordered region. The span at 175–184 (NASQTITQKK) shows a compositional bias: polar residues. Residues 194 to 207 (HGFEEERDVSRVEA) show a composition bias toward basic and acidic residues. 2 Cx9Cx9RCx2HK repeats span residues 247–272 (CGVL…TEHK) and 295–320 (CGVI…EDHK). Positions 339–363 (ILKEDKSKPKTRTSSTNQEEPGESL) are disordered. 2 Cx9Cx9RCx2HK repeats span residues 365-390 (CEAT…WQHK) and 409-434 (CGVK…QEHK).

The protein localises to the nucleus. In terms of biological role, transcription regulator that negatively modulates gibberellin-mediated developmental processes. May act as transcriptional repressor of giberellin controlled genes. Binds DNA without sequence preference. The sequence is that of Protein EFFECTOR OF TRANSCRIPTION from Brassica napus (Rape).